A 538-amino-acid polypeptide reads, in one-letter code: AAA ATPase forming ring-shaped complexes (538 aa).

Residues 14-54 are a coiled coil; sequence ARELRLANHRLGAQNEKLTEALKASREKLAEINSRLADMAE. 240–245 is an ATP binding site; the sequence is GNGKTL.

The protein belongs to the AAA ATPase family. In terms of assembly, homohexamer. Assembles into a hexameric ring structure.

The chain is AAA ATPase forming ring-shaped complexes from Corynebacterium urealyticum (strain ATCC 43042 / DSM 7109).